The following is a 305-amino-acid chain: Cbb3-type cytochrome c oxidase subunit CcoP2 (305 aa).

The next 2 helical transmembrane spans lie at 4-24 (FWSW…VWLL) and 57-77 (WWFM…VLYP). Cytochrome c domains are found at residues 130–209 (QALK…RSLS) and 219–300 (VDIE…YSLS). Positions 143, 146, 147, 186, 232, 235, 236, and 277 each coordinate heme c.

As to quaternary structure, component of the cbb3-type cytochrome c oxidase at least composed of CcoN, CcoO, CcoQ and CcoP. Requires heme c as cofactor.

The protein resides in the cell inner membrane. It functions in the pathway energy metabolism; oxidative phosphorylation. Functionally, C-type cytochrome. Part of the cbb3-type cytochrome c oxidase complex. CcoP subunit is required for transferring electrons from donor cytochrome c via its heme groups to CcoO subunit. From there, electrons are shuttled to the catalytic binuclear center of CcoN subunit where oxygen reduction takes place. The complex also functions as a proton pump. This is Cbb3-type cytochrome c oxidase subunit CcoP2 from Stutzerimonas stutzeri (Pseudomonas stutzeri).